The chain runs to 288 residues: Phenazine biosynthesis-like domain-containing protein 1 (288 aa).

Glu46 is a catalytic residue.

This sequence belongs to the PhzF family.

This Mus musculus (Mouse) protein is Phenazine biosynthesis-like domain-containing protein 1 (Pbld1).